The following is an 814-amino-acid chain: MGANEFRFFLSCDINSPVTFRIEKLDGNLPVKKSSDSGVVSIAEEKKPELYIECALYIDGAPFGLPMRTRLKTTGPPYCWNELITLSSKYRDLTAHSQLAITVWDVSCGKTEGLIGGATVLLFNSKMQMKSGKQKLRLWQGKEADGSFPTSTPGKVPRHERGELERLEKLMNKYERGQIQSIDWLDRLMLKSLDTIKEQESTKHGSSHLFVVIDFCSFEHRVVFQESGANLFITAPIGSTNEFVTVWDTELGKTNPSENKQLKLARSLDRGIIDRDLKPSNIERKSIQRVLKYPPTRTLSGDERQLLWKFRFSLMSEKRALTKFLRCVEWSDVQEAKQAIQLMYKWEMIDVCDALELLSPLFESEEVRAYAVSVLERADDEELQCYLLQLVQALRFERSDRSCLSQFLVQRALQNIELASFLRWYVAVELHDHVYAKRFYSTYELLEENIIKLPPGVNGEDGYQLWQSLVRQTELTAQLCSITREVRNVRGNTQKKIEKLRQLLGGLLSELTYFEEPIRSPLTPNVLIKGIVAGESSLFKSALHPLRLTFRTPEEGGSCKLIFKKGDDLRQDQLVVQMVWLMDRLLKLENLDLCLTPYKVLATGHDEGMLEFIPSRSLAQILSEHRSITSYLQKFHPDEHAPFGITATCLDTFIKSCAGYSVITYILGIGDRHLDNLLLTDDGRLFHVDFAFILGRDPKPFPPPMKLCKEMVEAMGGAESQYYTRFKSYCCEAYNILRKSSNLILNLFHLMAGSTIPDIASDPEKGILKLQEKFRLDMDDEACIHFFQDLINESVSALFPQMVETIHRWAQYWR.

The C2 PI3K-type domain occupies 25-177 (LDGNLPVKKS…EKLMNKYERG (153 aa)). In terms of domain architecture, PIK helical spans 274-449 (DRDLKPSNIE…YSTYELLEEN (176 aa)). The PI3K/PI4K catalytic domain maps to 532 to 799 (VAGESSLFKS…LINESVSALF (268 aa)). The G-loop stretch occupies residues 538 to 544 (LFKSALH). Positions 668–676 (GIGDRHLDN) are catalytic loop. The activation loop stretch occupies residues 687-708 (HVDFAFILGRDPKPFPPPMKLC).

This sequence belongs to the PI3/PI4-kinase family. Interacts with VPS15. Component of a complex made of VPS38/USL1 and PI3K main subunits such as VPS15, ATG6/VPS30 and VPS34. Binds directly to VPS38/USL1.

The enzyme catalyses a 1,2-diacyl-sn-glycero-3-phospho-(1D-myo-inositol) + ATP = a 1,2-diacyl-sn-glycero-3-phospho-(1D-myo-inositol-3-phosphate) + ADP + H(+). The PI3K inhibitor LY294002 affects phosphatidylinositol 3-phosphate (PI3P) levels and triggers a decrease in proline, hydrophobic and aromatic amino acids, and sugars (e.g. raffinose) accumulation in response to salt treatment correlated with lower P5CS1 expression and higher ProDH1 expression, genes involved in proline biosynthesis and catabolism, respectively. Its function is as follows. Involved in the negative regulation of proline, hydrophobic and aromatic amino acids accumulation, especially in response to salt (NaCl), either through inhibition of their synthesis and/or promotion of their catabolism. Triggers defense responses (e.g. pathogenesis related (PR1 and PR5) gene expression and hydrogen peroxide H(2)O(2) burst) to the bacterial pathogen compatible Pseudomonas syringae pv tomato DC3000 (Pst DC3000) and incompatible Pst DC3000 (avrRpt2), by regulating reactive ogygen species (ROS) production and by promoting stomatal closure. The protein is Phosphatidylinositol 3-kinase VPS34 of Arabidopsis thaliana (Mouse-ear cress).